A 491-amino-acid chain; its full sequence is UDP-N-acetylmuramate--L-alanine ligase (491 aa).

126–132 lines the ATP pocket; that stretch reads GTHGKTT.

Belongs to the MurCDEF family.

The protein resides in the cytoplasm. It carries out the reaction UDP-N-acetyl-alpha-D-muramate + L-alanine + ATP = UDP-N-acetyl-alpha-D-muramoyl-L-alanine + ADP + phosphate + H(+). It participates in cell wall biogenesis; peptidoglycan biosynthesis. Its function is as follows. Cell wall formation. This is UDP-N-acetylmuramate--L-alanine ligase from Yersinia pestis (strain Pestoides F).